The chain runs to 117 residues: Protein Aeq5-like2 (117 aa).

Over 1 to 36 (MLVNARAIRQSIGIVVAQCRRDLESNRTLDYRTRMR) the chain is Cytoplasmic. Residues 37 to 56 (TSLILVAMVMVSVLLPYTYG) traverse the membrane as a helical segment. At 57-117 (SSCDSFCTEQ…RFTKEPTEES (61 aa)) the chain is on the extracellular side. 4 cysteine pairs are disulfide-bonded: Cys-59–Cys-94, Cys-63–Cys-90, Cys-70–Cys-83, and Cys-74–Cys-80.

The mature peptide may be cleaved at a dibasic residue site and be shorter than the sequence shown (possibly residues 1-94). As to expression, expressed in endodermal ganglion neurons, apparently bipolar and following mesentery folds (observed in both planulae and primary polyps). It not expressed in nematocytes.

The protein resides in the membrane. The sequence is that of Protein Aeq5-like2 from Nematostella vectensis (Starlet sea anemone).